The chain runs to 194 residues: Leucyl/phenylalanyl-tRNA--protein transferase (194 aa).

Belongs to the L/F-transferase family.

It is found in the cytoplasm. The catalysed reaction is N-terminal L-lysyl-[protein] + L-leucyl-tRNA(Leu) = N-terminal L-leucyl-L-lysyl-[protein] + tRNA(Leu) + H(+). It carries out the reaction N-terminal L-arginyl-[protein] + L-leucyl-tRNA(Leu) = N-terminal L-leucyl-L-arginyl-[protein] + tRNA(Leu) + H(+). It catalyses the reaction L-phenylalanyl-tRNA(Phe) + an N-terminal L-alpha-aminoacyl-[protein] = an N-terminal L-phenylalanyl-L-alpha-aminoacyl-[protein] + tRNA(Phe). Functionally, functions in the N-end rule pathway of protein degradation where it conjugates Leu, Phe and, less efficiently, Met from aminoacyl-tRNAs to the N-termini of proteins containing an N-terminal arginine or lysine. The protein is Leucyl/phenylalanyl-tRNA--protein transferase of Chlorobaculum parvum (strain DSM 263 / NCIMB 8327) (Chlorobium vibrioforme subsp. thiosulfatophilum).